The sequence spans 261 residues: Eukaryotic translation initiation factor 3 subunit J-A (261 aa).

Residues 1–11 (MAAAAAAAAAA) show a composition bias toward low complexity. Residues 1 to 113 (MAAAAAAAAA…EPEESKVLTP (113 aa)) are disordered. A sufficient for interaction with EIF3B region spans residues 4–72 (AAAAAAAAGD…KEEAEVKPEV (69 aa)). 3 positions are modified to phosphoserine: Ser-14, Ser-16, and Ser-23. Residues 43–64 (EGEDEDEDVKDNWDDDDDENKE) are compositionally biased toward acidic residues. Over residues 65–109 (EAEVKPEVKISEKKKIAEKIKEKERQQKKRQEEIKKRLEEPEESK) the composition is skewed to basic and acidic residues. The stretch at 73–138 (KISEKKKIAE…ESDLELAKET (66 aa)) forms a coiled coil. Residue Lys-109 forms a Glycyl lysine isopeptide (Lys-Gly) (interchain with G-Cter in SUMO2) linkage. Thr-112 carries the phosphothreonine modification. Ser-130 carries the phosphoserine modification. The promotes stable association with the 40S ribosome stretch occupies residues 246-261 (YGGYEGGYVQDYEDFM). At Tyr-257 the chain carries Phosphotyrosine.

This sequence belongs to the eIF-3 subunit J family. As to quaternary structure, component of the eukaryotic translation initiation factor 3 (eIF-3) complex, which is composed of 13 subunits: EIF3A, EIF3B, EIF3C, EIF3D, EIF3E, EIF3F, EIF3G, EIF3H, EIF3I, EIF3J, EIF3K, EIF3L and EIF3M. The eIF-3 complex appears to include 3 stable modules: module A is composed of EIF3A, EIF3B, EIF3G and EIF3I; module B is composed of EIF3F, EIF3H, and EIF3M; and module C is composed of EIF3C, EIF3D, EIF3E, EIF3K and EIF3L. EIF3C of module C binds EIF3B of module A and EIF3H of module B, thereby linking the three modules. EIF3J is a labile subunit that binds to the eIF-3 complex via EIF3B. The eIF-3 complex interacts with RPS6KB1 under conditions of nutrient depletion. Mitogenic stimulation leads to binding and activation of a complex composed of MTOR and RPTOR, leading to phosphorylation and release of RPS6KB1 and binding of EIF4B to eIF-3. Phosphorylated. Phosphorylation is enhanced upon serum stimulation.

It localises to the cytoplasm. Component of the eukaryotic translation initiation factor 3 (eIF-3) complex, which is required for several steps in the initiation of protein synthesis. The eIF-3 complex associates with the 40S ribosome and facilitates the recruitment of eIF-1, eIF-1A, eIF-2:GTP:methionyl-tRNAi and eIF-5 to form the 43S pre-initiation complex (43S PIC). The eIF-3 complex stimulates mRNA recruitment to the 43S PIC and scanning of the mRNA for AUG recognition. The eIF-3 complex is also required for disassembly and recycling of post-termination ribosomal complexes and subsequently prevents premature joining of the 40S and 60S ribosomal subunits prior to initiation. The eIF-3 complex specifically targets and initiates translation of a subset of mRNAs involved in cell proliferation, including cell cycling, differentiation and apoptosis, and uses different modes of RNA stem-loop binding to exert either translational activation or repression. This subunit binds directly within the mRNA entry channel of the 40S ribosome to the aminoacyl (A) site. It may regulate the interaction between the 43S PIC and mRNA. This is Eukaryotic translation initiation factor 3 subunit J-A (Eif3j1) from Mus musculus (Mouse).